The sequence spans 279 residues: 2-dehydro-3-deoxyphosphooctonate aldolase (279 aa).

Belongs to the KdsA family.

It is found in the cytoplasm. The catalysed reaction is D-arabinose 5-phosphate + phosphoenolpyruvate + H2O = 3-deoxy-alpha-D-manno-2-octulosonate-8-phosphate + phosphate. Its pathway is carbohydrate biosynthesis; 3-deoxy-D-manno-octulosonate biosynthesis; 3-deoxy-D-manno-octulosonate from D-ribulose 5-phosphate: step 2/3. The protein operates within bacterial outer membrane biogenesis; lipopolysaccharide biosynthesis. The sequence is that of 2-dehydro-3-deoxyphosphooctonate aldolase from Aromatoleum aromaticum (strain DSM 19018 / LMG 30748 / EbN1) (Azoarcus sp. (strain EbN1)).